Consider the following 118-residue polypeptide: Small ribosomal subunit protein uS13 (118 aa).

Positions 93–118 (KGLPVRGQRTKTNARTRKGPRKPIRK) are disordered.

Belongs to the universal ribosomal protein uS13 family. As to quaternary structure, part of the 30S ribosomal subunit. Forms a loose heterodimer with protein S19. Forms two bridges to the 50S subunit in the 70S ribosome.

Its function is as follows. Located at the top of the head of the 30S subunit, it contacts several helices of the 16S rRNA. In the 70S ribosome it contacts the 23S rRNA (bridge B1a) and protein L5 of the 50S subunit (bridge B1b), connecting the 2 subunits; these bridges are implicated in subunit movement. Contacts the tRNAs in the A and P-sites. This chain is Small ribosomal subunit protein uS13, found in Ectopseudomonas mendocina (strain ymp) (Pseudomonas mendocina).